The following is a 158-amino-acid chain: Style cell-cycle inhibitor 1-B (158 aa).

2 stretches are compositionally biased toward basic and acidic residues: residues 1-11 (MGSDKKTTEEK) and 22-47 (PRDE…DKSK). The tract at residues 1 to 88 (MGSDKKTTEE…DKSKNKFEEL (88 aa)) is disordered. Composition is skewed to basic residues over residues 48-58 (KEKHKSHKSKC) and 67-81 (GEKH…KDKS).

As to expression, specifically expressed in flowers pistils, especially in stigmas and styles. Barely detected in roots, stems, leaves, sepals, petals and stamen.

The protein resides in the nucleus. Component of the auxin signaling transduction pathway that regulates cell proliferation and differentiation during flowers stigmas and styles development. Involved in the regulation of auxin-related genes. The polypeptide is Style cell-cycle inhibitor 1-B (Nicotiana tabacum (Common tobacco)).